We begin with the raw amino-acid sequence, 320 residues long: Lipoyl synthase (320 aa).

A compositionally biased stretch (polar residues) spans 1–11 (MGGMNDLSSTP). Residues 1 to 24 (MGGMNDLSSTPAPEGDRPARQRKP) form a disordered region. Residues 14–24 (EGDRPARQRKP) are compositionally biased toward basic and acidic residues. C53, C58, C64, C79, C83, C86, and S293 together coordinate [4Fe-4S] cluster. One can recognise a Radical SAM core domain in the interval 65 to 282 (WTKKHATVMI…GAIARAKGFL (218 aa)).

This sequence belongs to the radical SAM superfamily. Lipoyl synthase family. Requires [4Fe-4S] cluster as cofactor.

It is found in the cytoplasm. The catalysed reaction is [[Fe-S] cluster scaffold protein carrying a second [4Fe-4S](2+) cluster] + N(6)-octanoyl-L-lysyl-[protein] + 2 oxidized [2Fe-2S]-[ferredoxin] + 2 S-adenosyl-L-methionine + 4 H(+) = [[Fe-S] cluster scaffold protein] + N(6)-[(R)-dihydrolipoyl]-L-lysyl-[protein] + 4 Fe(3+) + 2 hydrogen sulfide + 2 5'-deoxyadenosine + 2 L-methionine + 2 reduced [2Fe-2S]-[ferredoxin]. It functions in the pathway protein modification; protein lipoylation via endogenous pathway; protein N(6)-(lipoyl)lysine from octanoyl-[acyl-carrier-protein]: step 2/2. Functionally, catalyzes the radical-mediated insertion of two sulfur atoms into the C-6 and C-8 positions of the octanoyl moiety bound to the lipoyl domains of lipoate-dependent enzymes, thereby converting the octanoylated domains into lipoylated derivatives. The sequence is that of Lipoyl synthase from Erythrobacter litoralis (strain HTCC2594).